The sequence spans 494 residues: Transcriptional regulator calD (494 aa).

It is found in the nucleus. Functionally, transcription co-regulator that might be involved in the regulation of the expression of the gene cluster that mediates the biosynthesis of calbistrins and related compounds such as decumbenones. Calbistrin A is a secondary metabolite with an interesting structure that was recently found to have bioactivity against leukemia cells. It consists of two polyketides linked by an ester bond: a bicyclic decalin containing polyketide and a linear 12 carbon dioic acid structure. This is Transcriptional regulator calD from Penicillium decumbens.